A 242-amino-acid chain; its full sequence is ATP-dependent dethiobiotin synthetase BioD (242 aa).

12–17 (EVGKTV) is an ATP binding site. Residue T16 participates in Mg(2+) binding. The active site involves K37. Position 41 (S41) interacts with substrate. Residues D51 and 112–115 (EGAG) contribute to the ATP site. Residues D51 and E112 each contribute to the Mg(2+) site.

Belongs to the dethiobiotin synthetase family. As to quaternary structure, homodimer. The cofactor is Mg(2+).

Its subcellular location is the cytoplasm. It carries out the reaction (7R,8S)-7,8-diammoniononanoate + CO2 + ATP = (4R,5S)-dethiobiotin + ADP + phosphate + 3 H(+). It functions in the pathway cofactor biosynthesis; biotin biosynthesis; biotin from 7,8-diaminononanoate: step 1/2. Its function is as follows. Catalyzes a mechanistically unusual reaction, the ATP-dependent insertion of CO2 between the N7 and N8 nitrogen atoms of 7,8-diaminopelargonic acid (DAPA, also called 7,8-diammoniononanoate) to form a ureido ring. This is ATP-dependent dethiobiotin synthetase BioD from Bacillus cereus (strain G9842).